The chain runs to 173 residues: NADH-ubiquinone oxidoreductase chain 6 (173 aa).

The next 6 membrane-spanning stretches (helical) occupy residues 1 to 21 (MIYFVFVVLMGLVVGLMAVAS), 27 to 47 (FAALGLVFSAVVGCGFLVGYG), 53 to 73 (LVLFLIYLGGMLVVFAYSAAL), 82 to 102 (WGSWSVFLYILVYLFGFLLVG), 106 to 126 (YGWWYDFYWMSLDVFGEMSVL), and 141 to 161 (GFLLLVTGWVLLLALFVVLEI).

The protein belongs to the complex I subunit 6 family.

The protein localises to the mitochondrion membrane. The enzyme catalyses a ubiquinone + NADH + 5 H(+)(in) = a ubiquinol + NAD(+) + 4 H(+)(out). In terms of biological role, core subunit of the mitochondrial membrane respiratory chain NADH dehydrogenase (Complex I) that is believed to belong to the minimal assembly required for catalysis. Complex I functions in the transfer of electrons from NADH to the respiratory chain. The immediate electron acceptor for the enzyme is believed to be ubiquinone. The chain is NADH-ubiquinone oxidoreductase chain 6 (MT-ND6) from Latimeria chalumnae (Coelacanth).